Here is a 748-residue protein sequence, read N- to C-terminus: Probable transcriptional regulator SLK1 (748 aa).

Disordered stretches follow at residues glutamine 67 to asparagine 93 and glutamine 138 to glutamine 163. Low complexity predominate over residues glutamine 71–glutamine 81. The interval proline 204–leucine 451 is dimerization. A Nuclear localization signal motif is present at residues arginine 213–arginine 227. Over residues asparagine 572 to phenylalanine 587 the composition is skewed to polar residues. Disordered regions lie at residues asparagine 572 to proline 653 and glutamate 667 to phenylalanine 712. Positions serine 588–glutamine 606 are enriched in low complexity. Over residues phenylalanine 615 to proline 653 the composition is skewed to polar residues. Over residues glutamate 667–serine 686 the composition is skewed to low complexity. The segment covering asparagine 687–isoleucine 699 has biased composition (polar residues).

The protein belongs to the adn1/SEU family. As to quaternary structure, forms corepressor complexes with LUH; LUH is the transcription repressor subunit and SLK1 the specific DNA-binding adapters. Expressed in young flower meristems, ovules and the carpel margin meristem.

It is found in the nucleus. In terms of biological role, probable transcription regulator that functions in the development of the carpel margin meristem similarly to SEUSS (SEU). In association with SEU, supports organ development from meristematic regions by facilitating auxin response and thus organ initiation, and by sustaining meristematic potential through the maintenance of PHABULOSA expression. DNA-binding adapter subunit of the SEU-SLK1 transcriptional corepressor of abiotic stress (e.g. salt and osmotic stress) response genes. The polypeptide is Probable transcriptional regulator SLK1 (SLK1) (Arabidopsis thaliana (Mouse-ear cress)).